A 394-amino-acid polypeptide reads, in one-letter code: Dual specificity protein phosphatase 4 (394 aa).

Valine 2 carries the N-acetylvaline modification. Residues 41–159 form the Rhodanese domain; sequence SGGKCLLLDC…FSSEYPEFCS (119 aa). In terms of domain architecture, Tyrosine-protein phosphatase spans 195–336; sequence GPVEILPFLY…LLQFESQVLA (142 aa). Residue cysteine 280 is the Phosphocysteine intermediate of the active site. Residues serine 386 and serine 391 each carry the phosphoserine; by MAPK modification.

The protein belongs to the protein-tyrosine phosphatase family. Non-receptor class dual specificity subfamily. Hollow spherical complex composed of 24 subunits with pseudooctahedral symmetry, has a tetramer as the basic unit. In terms of processing, phosphorylation in the C-terminus by ERK1/2 inhibits proteasomal degradation and stabilizes the protein.

Its subcellular location is the nucleus. It carries out the reaction O-phospho-L-tyrosyl-[protein] + H2O = L-tyrosyl-[protein] + phosphate. The enzyme catalyses O-phospho-L-seryl-[protein] + H2O = L-seryl-[protein] + phosphate. It catalyses the reaction O-phospho-L-threonyl-[protein] + H2O = L-threonyl-[protein] + phosphate. Its function is as follows. Regulates mitogenic signal transduction by dephosphorylating both Thr and Tyr residues on MAP kinases ERK1 and ERK2. This chain is Dual specificity protein phosphatase 4 (DUSP4), found in Homo sapiens (Human).